Here is a 199-residue protein sequence, read N- to C-terminus: Auxin-responsive protein IAA1 (199 aa).

The EAR-like (transcriptional repression) signature appears at 25 to 29; it reads LTLRL. The disordered stretch occupies residues 31–74; it reads GSLAAAAAPDPDRKRSSPSSSDAADAADNSSPLAAAADAPPAPK. Positions 47–69 are enriched in low complexity; that stretch reads SPSSSDAADAADNSSPLAAAADA. A PB1 domain is found at 93–187; that stretch reads AKFVKVAVDG…TCQRLRLMKS (95 aa).

The protein belongs to the Aux/IAA family. Homodimers and heterodimers. Highly expressed in flowers. Expressed at low levels in roots and shoots.

It localises to the nucleus. Functionally, aux/IAA proteins are short-lived transcriptional factors that function as repressors of early auxin response genes at low auxin concentrations. This Oryza sativa subsp. japonica (Rice) protein is Auxin-responsive protein IAA1 (IAA1).